A 299-amino-acid polypeptide reads, in one-letter code: Nucleophosmin (299 aa).

Over residues 125 to 134 (ESSDDEDEEH) the composition is skewed to acidic residues. The tract at residues 125–247 (ESSDDEDEEH…TPKTPLSSEE (123 aa)) is disordered. A Nuclear localization signal motif is present at residues 153–158 (PRKKTR). The segment covering 160-187 (EEEEEDSDEDDDDDEDDDDEDDDEEEEE) has biased composition (acidic residues). Residues 188–197 (TPVKKTDSTK) are compositionally biased toward basic and acidic residues. Positions 189 to 195 (PVKKTDS) match the Nuclear localization signal motif. 4 consecutive repeats follow at residues 218–220 (KTP), 221–223 (KTP), 237–239 (KTP), and 240–242 (KTP). A 4 X 3 AA repeats of K-T-P region spans residues 218–242 (KTPKTPEQKGKQDTKPQTPKTPKTP). Positions 221-231 (KTPEQKGKQDT) are enriched in basic and acidic residues. Over residues 232-242 (KPQTPKTPKTP) the composition is skewed to low complexity.

This sequence belongs to the nucleoplasmin family. As to quaternary structure, decamer formed by two pentameric rings associated in a head-to-head fashion. In terms of processing, phosphorylated.

Its subcellular location is the cytoplasm. It is found in the nucleus. The protein resides in the nucleoplasm. It localises to the nucleolus. In terms of biological role, acts as a chaperonin for the core histones H3, H2B and H4. Associated with nucleolar ribonucleoprotein structures and bind single-stranded nucleic acids. It may function in the assembly and/or transport of ribosome. May stimulate endonuclease activity on apurinic/apyrimidinic (AP) double-stranded DNA. May inhibit endonuclease activity on AP single-stranded RNA. This Xenopus laevis (African clawed frog) protein is Nucleophosmin (npm1).